The following is a 1114-amino-acid chain: Brother of CDO (1114 aa).

The N-terminal stretch at 1–30 (MLRGTMTAWRGMRPEVTLACLLLATAGCFA) is a signal peptide. The Extracellular portion of the chain corresponds to 31-855 (DLNEVPQVTV…MVARSSDLPY (825 aa)). Ig-like C2-type domains follow at residues 36–123 (PQVT…ATVT), 129–213 (DFKL…VKTS), 235–315 (PEAQ…VILY), and 323–409 (PEVT…LRTS). 4 cysteine pairs are disulfide-bonded: Cys57–Cys106, Cys150–Cys200, Cys252–Cys299, and Cys344–Cys391. Residues Asn65, Asn76, Asn98, Asn189, and Asn275 are each glycosylated (N-linked (GlcNAc...) asparagine). The segment at 422–474 (ELATGTPPVSPSKLGNPEQMLRGQPALPRPPTSVGPASPQCPGEKGQGAPAEA) is disordered. 3 Fibronectin type-III domains span residues 474-571 (APII…GRRP), 608-703 (APDR…VVSG), and 712-812 (PVAG…TKAR). Asn517 carries an N-linked (GlcNAc...) asparagine glycan. The segment at 577–615 (ASKEQQIQRDDPGASPQSSSQPDHGRLSPPEAPDRPTIS) is disordered. Residues Asn725 and Asn759 are each glycosylated (N-linked (GlcNAc...) asparagine). The disordered stretch occupies residues 812–833 (RKSSGQPGRLPPPTLAPPQPPL). Residues 820–833 (RLPPPTLAPPQPPL) show a composition bias toward pro residues. A helical transmembrane segment spans residues 856–876 (LIVGVVLGSIVLIIVTFIPFC). Topologically, residues 877-1114 (LWRAWSKQKH…VSFETPPLTI (238 aa)) are cytoplasmic. The span at 972–986 (QTHLGNGYDPQSHQI) shows a compositional bias: polar residues. The disordered stretch occupies residues 972 to 998 (QTHLGNGYDPQSHQITRGPKSSPDEGS).

Part of a complex that contains BOC, CDON, NEO1, cadherins and CTNNB1. Interacts with NTN3. Interacts with SHH, DHH and IHH. Interacts with CDH2 and CTNNB1. Interacts with CDH15 only during the early stages of myoblast differentiation. Post-translationally, N-glycosylated. Detected in skeletal muscle, heart, thymus, kidney and small intestine. Detected at lower levels in brain, placenta, lung and colon mucosa.

It localises to the cell membrane. Component of a cell-surface receptor complex that mediates cell-cell interactions between muscle precursor cells. Promotes differentiation of myogenic cells. In Homo sapiens (Human), this protein is Brother of CDO (BOC).